The primary structure comprises 205 residues: Lymphotoxin-alpha (205 aa).

The N-terminal stretch at Met-1–Gly-34 is a signal peptide. O-linked (GalNAc...) threonine glycosylation occurs at Thr-41. Positions Pro-63–Leu-205 constitute a THD domain. An N-linked (GlcNAc...) asparagine glycan is attached at Asn-96.

The protein belongs to the tumor necrosis factor family. As to quaternary structure, homotrimer, and heterotrimer of either two LTB and one LTA subunits or (less prevalent) two LTA and one LTB subunits. Interacts with TNFRSF14.

The protein localises to the secreted. Its subcellular location is the membrane. Its function is as follows. Cytokine that in its homotrimeric form binds to TNFRSF1A/TNFR1, TNFRSF1B/TNFBR and TNFRSF14/HVEM. In its heterotrimeric form with LTB binds to TNFRSF3/LTBR. Lymphotoxin is produced by lymphocytes and is cytotoxic for a wide range of tumor cells in vitro and in vivo. In Macaca mulatta (Rhesus macaque), this protein is Lymphotoxin-alpha (LTA).